The following is a 154-amino-acid chain: Myoglobin (154 aa).

Positions Gly2–Lys148 constitute a Globin domain. Ser4 bears the Phosphoserine mark. Residue His65 coordinates nitrite. His65 is an O2 binding site. Thr68 is modified (phosphothreonine). Heme b is bound at residue His94.

Belongs to the globin family. In terms of assembly, monomeric.

The protein localises to the cytoplasm. The protein resides in the sarcoplasm. The catalysed reaction is Fe(III)-heme b-[protein] + nitric oxide + H2O = Fe(II)-heme b-[protein] + nitrite + 2 H(+). It catalyses the reaction H2O2 + AH2 = A + 2 H2O. Monomeric heme protein which primary function is to store oxygen and facilitate its diffusion within muscle tissues. Reversibly binds oxygen through a pentacoordinated heme iron and enables its timely and efficient release as needed during periods of heightened demand. Depending on the oxidative conditions of tissues and cells, and in addition to its ability to bind oxygen, it also has a nitrite reductase activity whereby it regulates the production of bioactive nitric oxide. Under stress conditions, like hypoxia and anoxia, it also protects cells against reactive oxygen species thanks to its pseudoperoxidase activity. In Didelphis virginiana (North American opossum), this protein is Myoglobin (MB).